A 963-amino-acid polypeptide reads, in one-letter code: Iron-responsive element-binding protein 2 (963 aa).

[4Fe-4S] cluster contacts are provided by C512, C578, and C581.

It belongs to the aconitase/IPM isomerase family. Interacts with RBCK1 only in iron-rich conditions. Interacts (when associated with the 4Fe-4S) with FBXL5. Interacts with CIAO1 and CIAO2A. [4Fe-4S] cluster serves as cofactor. Post-translationally, ubiquitinated and degraded by the proteasome in presence of high level of iron and oxygen. Ubiquitinated by a SCF complex containing FBXL5. Upon iron and oxygen depletion FBXL5 is degraded, preventing ubiquitination and allowing its RNA-binding activity. As to expression, ubiquitously expressed in rat tissues, the highest amounts present in skeletal muscle and heart.

The protein resides in the cytoplasm. RNA-binding protein that binds to iron-responsive elements (IRES), which are stem-loop structures found in the 5'-UTR of ferritin, and delta aminolevulinic acid synthase mRNAs, and in the 3'-UTR of transferrin receptor mRNA. Binding to the IRE element in ferritin results in the repression of its mRNA translation. Binding of the protein to the transferrin receptor mRNA inhibits the degradation of this otherwise rapidly degraded mRNA. This chain is Iron-responsive element-binding protein 2 (Ireb2), found in Rattus norvegicus (Rat).